The sequence spans 360 residues: MDTMIDIKGLSIDELERFLLGKGKERYRARQIFKWLYQRGATSFAEMTDLAKELRRDLEETARISTLSPEALEISRDGTRKYLFRLDDGCSVESVLIPEEDRNTLCISSQVGCAMACEFCLTGTFRLTRNLTTAEIVNQVCAVQRDVPVRNIVFMGMGEPLANLDNVIRALQIMLHDDGLQFSTRRITVSTAGLVPEMERLGRSVTVNLAVSLNATTDELRDRIMPINRKYPLAVLLDACRRFPLPGRRKITIEYVLLGGVNDTLDDAKRLVRLLSDIPSKINLIPFNEHEGCSFRSPSQDAIDRFHRYLLDKHFTVITRSSRGADISAACGQLKGKLDALKPSGAGKQIEVSDSTNEVT.

Glu-93 serves as the catalytic Proton acceptor. A Radical SAM core domain is found at Glu-99–Asp-326. An intrachain disulfide couples Cys-106 to Cys-331. Residues Cys-113, Cys-117, and Cys-120 each coordinate [4Fe-4S] cluster. Residues Gly-158–Glu-159, Ser-190, Ser-212–Asn-214, and Asn-288 each bind S-adenosyl-L-methionine. Cys-331 serves as the catalytic S-methylcysteine intermediate.

This sequence belongs to the radical SAM superfamily. RlmN family. [4Fe-4S] cluster is required as a cofactor.

The protein localises to the cytoplasm. The enzyme catalyses adenosine(2503) in 23S rRNA + 2 reduced [2Fe-2S]-[ferredoxin] + 2 S-adenosyl-L-methionine = 2-methyladenosine(2503) in 23S rRNA + 5'-deoxyadenosine + L-methionine + 2 oxidized [2Fe-2S]-[ferredoxin] + S-adenosyl-L-homocysteine. It carries out the reaction adenosine(37) in tRNA + 2 reduced [2Fe-2S]-[ferredoxin] + 2 S-adenosyl-L-methionine = 2-methyladenosine(37) in tRNA + 5'-deoxyadenosine + L-methionine + 2 oxidized [2Fe-2S]-[ferredoxin] + S-adenosyl-L-homocysteine. Specifically methylates position 2 of adenine 2503 in 23S rRNA and position 2 of adenine 37 in tRNAs. m2A2503 modification seems to play a crucial role in the proofreading step occurring at the peptidyl transferase center and thus would serve to optimize ribosomal fidelity. The protein is Dual-specificity RNA methyltransferase RlmN of Geobacter sulfurreducens (strain ATCC 51573 / DSM 12127 / PCA).